Consider the following 69-residue polypeptide: UPF0435 protein SH1076 (69 aa).

Belongs to the UPF0435 family.

This is UPF0435 protein SH1076 from Staphylococcus haemolyticus (strain JCSC1435).